Here is a 71-residue protein sequence, read N- to C-terminus: Large ribosomal subunit protein bL31 (71 aa).

Residues cysteine 16, cysteine 18, cysteine 37, and cysteine 40 each coordinate Zn(2+).

This sequence belongs to the bacterial ribosomal protein bL31 family. Type A subfamily. Part of the 50S ribosomal subunit. Zn(2+) serves as cofactor.

Binds the 23S rRNA. The polypeptide is Large ribosomal subunit protein bL31 (Solidesulfovibrio magneticus (strain ATCC 700980 / DSM 13731 / RS-1) (Desulfovibrio magneticus)).